A 600-amino-acid polypeptide reads, in one-letter code: Aspartate--tRNA(Asp/Asn) ligase (600 aa).

Residue glutamate 176 participates in L-aspartate binding. Residues 200-203 are aspartate; that stretch reads QQFK. The L-aspartate site is built by arginine 222 and histidine 452. 222 to 224 is a binding site for ATP; sequence RDE. Glutamate 490 serves as a coordination point for ATP. An L-aspartate-binding site is contributed by arginine 497. 542–545 provides a ligand contact to ATP; sequence GIDR.

It belongs to the class-II aminoacyl-tRNA synthetase family. Type 1 subfamily. In terms of assembly, homodimer.

The protein resides in the cytoplasm. The enzyme catalyses tRNA(Asx) + L-aspartate + ATP = L-aspartyl-tRNA(Asx) + AMP + diphosphate. Functionally, aspartyl-tRNA synthetase with relaxed tRNA specificity since it is able to aspartylate not only its cognate tRNA(Asp) but also tRNA(Asn). Reaction proceeds in two steps: L-aspartate is first activated by ATP to form Asp-AMP and then transferred to the acceptor end of tRNA(Asp/Asn). This is Aspartate--tRNA(Asp/Asn) ligase from Rickettsia felis (strain ATCC VR-1525 / URRWXCal2) (Rickettsia azadi).